A 130-amino-acid chain; its full sequence is Small ribosomal subunit protein uS9 (130 aa).

The disordered stretch occupies residues 104–130; it reads LTRDPRMKERRKYGLKKARKAPQFSKR. The segment covering 111-130 has biased composition (basic residues); that stretch reads KERRKYGLKKARKAPQFSKR.

The protein belongs to the universal ribosomal protein uS9 family.

This is Small ribosomal subunit protein uS9 from Moorella thermoacetica (strain ATCC 39073 / JCM 9320).